We begin with the raw amino-acid sequence, 386 residues long: MLKRINLLREFSIPLLAGVLTALVWANVAPDSYHKFNHDHFLGPLSFHFVTNDIFMAFFFAIAAVEITQSCLPGGDMSPLNKALNPLLATAGGVVGPVGVYLALNSLVGSSAFTNGWGIPTATDIAFAWLAARLIFGKNHPVIAFLLLLAIADDAIGLVIIAVFYPDPVLPVAPPWLMLTAAGMLIAFILRRKQVKSYWPYLLFGGVPSWFGLFKAHLHPALALVFIIPFLPHPTREVKHMFEEDPKDYSPLARFEHEWKIIVDFGLFMFGLANAGVGFSAMNTVTWLVFCALLFGKVTGIFVFALLGEKLGFPLPQGMGRRHLLVAGIIAGIGFTVALFVAGEAFTDPVVQGAAKMGAILSIAVFPVAMAAAKLLGIRKRGHSSS.

Transmembrane regions (helical) follow at residues 10–30, 45–65, 84–104, 116–136, 142–162, 169–189, 261–281, 287–307, 323–343, and 358–378; these read EFSI…NVAP, LSFH…IAAV, LNPL…YLAL, GWGI…RLIF, VIAF…VIIA, VLPV…IAFI, IIVD…GFSA, WLVF…FALL, HLLV…FVAG, and GAIL…LLGI.

It belongs to the NhaA Na(+)/H(+) (TC 2.A.33) antiporter family.

It is found in the cell inner membrane. The catalysed reaction is Na(+)(in) + 2 H(+)(out) = Na(+)(out) + 2 H(+)(in). Functionally, na(+)/H(+) antiporter that extrudes sodium in exchange for external protons. In Geotalea uraniireducens (strain Rf4) (Geobacter uraniireducens), this protein is Na(+)/H(+) antiporter NhaA.